A 60-amino-acid chain; its full sequence is Large ribosomal subunit protein bL32 (60 aa).

It belongs to the bacterial ribosomal protein bL32 family.

In Thermosipho melanesiensis (strain DSM 12029 / CIP 104789 / BI429), this protein is Large ribosomal subunit protein bL32.